We begin with the raw amino-acid sequence, 45 residues long: Bomanin Short 2 (45 aa).

Positions 1 to 20 (MKFFSVVTVFVFGLLALANA) are cleaved as a signal peptide. A propeptide spans 21-27 (VPLSPDP) (removed by a dipeptidylpeptidase). Cys36 and Cys39 are oxidised to a cystine. Glycine amide is present on Gly43.

In terms of tissue distribution, hemolymph (at protein level).

Its subcellular location is the secreted. Its function is as follows. Secreted immune-induced peptide induced by Toll signaling. Has a role in resistance to bacterial and fungal infections. In Drosophila melanogaster (Fruit fly), this protein is Bomanin Short 2.